The sequence spans 412 residues: MIEEEVLKIIKPTEEDKKGIEKVLEIIRERLNKLDFEVEGSFRKGTWLRQDTDIDVFVFYPKDVGKEYLERNALNDIINRIKDLDYTLAYAEHPYVIVNINNVEVDIVPALRVESGDKAITAVDRTPFHTKYVTSHLDERGKDEVRLLKRFMKGIGVYGAELKVQGFSGYATELLIIYYGNFRKVLEEASKWKHPIKIELTKPMKIFSEPLIIPDPVDPKRNVTAAVSLKNIATFSIAAKYYLKNPSIEFFFPSKKVEEKVKGDVLILRLNLDEKSSEDIVWGQIKRSVNKIERALKQYGFRVIDVQAWGDTNNITIAVQLESKNIGQYYLNIGPQYYSETIEDFIQKNDNIWVGEDGRLYSIKERKEYDAETIAKKNIVLKVKYNIESYWLQNKEDQQIMKFLRKTPTWLK.

Residues Ser-41 and Lys-44 each coordinate ATP. Residues Ser-41 and Lys-44 each contribute to the CTP site. The Mg(2+) site is built by Asp-53, Asp-55, and Asp-106. Residues His-129, Lys-149, and Tyr-158 each coordinate ATP. Residues His-129, Lys-149, and Tyr-158 each contribute to the CTP site.

Belongs to the tRNA nucleotidyltransferase/poly(A) polymerase family. Archaeal CCA-adding enzyme subfamily. In terms of assembly, homodimer. Mg(2+) serves as cofactor.

The catalysed reaction is a tRNA precursor + 2 CTP + ATP = a tRNA with a 3' CCA end + 3 diphosphate. The enzyme catalyses a tRNA with a 3' CCA end + 2 CTP + ATP = a tRNA with a 3' CCACCA end + 3 diphosphate. Functionally, catalyzes the addition and repair of the essential 3'-terminal CCA sequence in tRNAs without using a nucleic acid template. Adds these three nucleotides in the order of C, C, and A to the tRNA nucleotide-73, using CTP and ATP as substrates and producing inorganic pyrophosphate. tRNA 3'-terminal CCA addition is required both for tRNA processing and repair. Also involved in tRNA surveillance by mediating tandem CCA addition to generate a CCACCA at the 3' terminus of unstable tRNAs. While stable tRNAs receive only 3'-terminal CCA, unstable tRNAs are marked with CCACCA and rapidly degraded. The polypeptide is CCA-adding enzyme (Saccharolobus islandicus (strain Y.N.15.51 / Yellowstone #2) (Sulfolobus islandicus)).